Here is a 234-residue protein sequence, read N- to C-terminus: Zinc finger FYVE domain-containing protein 21 (234 aa).

The FYVE-type zinc finger occupies 44-104; the sequence is DKECPRCMQC…QCADCALVSH (61 aa). Residues C50, C53, C66, C69, C74, C77, C96, and C99 each contribute to the Zn(2+) site. The segment at 107–234 is PH-like; that stretch reads AEFYDKQLKV…TKLLYESRDQ (128 aa).

Interacts with PTK2/FAK1.

It localises to the cell junction. The protein resides in the focal adhesion. Its subcellular location is the cytoplasmic vesicle. It is found in the endosome. Plays a role in cell adhesion, and thereby in cell motility which requires repeated formation and disassembly of focal adhesions. Regulates microtubule-induced PTK2/FAK1 dephosphorylation, an event important for focal adhesion disassembly, as well as integrin beta-1/ITGB1 cell surface expression. This Rattus norvegicus (Rat) protein is Zinc finger FYVE domain-containing protein 21 (Zfyve21).